The primary structure comprises 296 residues: CDP-diacylglycerol--glycerol-3-phosphate 3-phosphatidyltransferase 1, chloroplastic/mitochondrial (296 aa).

The N-terminal 39 residues, 1-39 (MLRSGLASLIVDVNLRRTLRPSPTFSFPAHLSRCIITSR), are a transit peptide targeting the chloroplast and mitochondrion. Over residues 62–82 (FSSSSSSEQSRPTSSSRNSFS) the composition is skewed to low complexity. Positions 62 to 103 (FSSSSSSEQSRPTSSSRNSFSGHGQLDSDDNSSPPPSQSSSK) are disordered. Transmembrane regions (helical) follow at residues 104 to 124 (VLTL…LLVA), 126 to 146 (FYVD…AAAI), 164 to 184 (FGAF…LILL), 189 to 209 (IQVA…IAII), and 261 to 281 (VGWL…LSVW).

Belongs to the CDP-alcohol phosphatidyltransferase class-I family. Mn(2+) is required as a cofactor.

It is found in the plastid. Its subcellular location is the chloroplast membrane. It localises to the mitochondrion membrane. The catalysed reaction is a CDP-1,2-diacyl-sn-glycerol + sn-glycerol 3-phosphate = a 1,2-diacyl-sn-glycero-3-phospho-(1'-sn-glycero-3'-phosphate) + CMP + H(+). Its pathway is phospholipid metabolism; phosphatidylglycerol biosynthesis; phosphatidylglycerol from CDP-diacylglycerol: step 1/2. Catalyzes the committed step to the synthesis of the acidic phospholipids, including phosphatidylglycerol (PG). Transfers specifically a phosphatidyl group from CDP-diacylglycerol to glycerol-3-phosphate to form phosphatidylglycerophosphate. Cannot catalyze the phosphatidyl group transfer to inositol, serine, choline or phosphatidylglycerol. Possesses high activity with CDP-dipalmitoylglycerol and low activity with CDP-dioleoylglycerol. Essential for chloroplast differentiation and PG accumulation in thylakoids, an essential process for the assembly of antenna-reaction center complexes to optimize energy transfer from antenna pigments, and for subsequent photochemical efficiency of photosystem II (PSII). During cold acclimation (at 5 degrees Celsius), necessary for the photosystem I (PSI) photochemistry, including both reaction center and light-harvesting integrity. But dispensable in mitochondrion, being redundant with PGPS2 for the production of PG and its derivative cardiolipin (CL) in mitochondrial membranes. Together with PGPS2, required for the proper embryo development by providing PG accurate levels. The chain is CDP-diacylglycerol--glycerol-3-phosphate 3-phosphatidyltransferase 1, chloroplastic/mitochondrial from Arabidopsis thaliana (Mouse-ear cress).